Here is a 189-residue protein sequence, read N- to C-terminus: Threonylcarbamoyl-AMP synthase (189 aa).

In terms of domain architecture, YrdC-like spans 7–189 (NFTVKGLTEQ…DAITGKIIRK (183 aa)).

It belongs to the SUA5 family. TsaC subfamily.

It is found in the cytoplasm. It catalyses the reaction L-threonine + hydrogencarbonate + ATP = L-threonylcarbamoyladenylate + diphosphate + H2O. Required for the formation of a threonylcarbamoyl group on adenosine at position 37 (t(6)A37) in tRNAs that read codons beginning with adenine. Catalyzes the conversion of L-threonine, HCO(3)(-)/CO(2) and ATP to give threonylcarbamoyl-AMP (TC-AMP) as the acyladenylate intermediate, with the release of diphosphate. This is Threonylcarbamoyl-AMP synthase from Blochmanniella floridana.